A 370-amino-acid polypeptide reads, in one-letter code: Ni-sirohydrochlorin a,c-diamide reductive cyclase complex, component CfbD (370 aa).

This sequence belongs to the NifD/NifK/NifE/NifN family. In terms of assembly, homodimer or monomer. The Ni-sirohydrochlorin a,c-diamide reductive cyclase complex is composed of a NifH homolog component CfbC and a NifD homolog component CfbD. It depends on [4Fe-4S] cluster as a cofactor.

The enzyme catalyses Ni-sirohydrochlorin a,c-diamide + 3 AH2 + ATP + H2O = 15,17(3)-seco-F430-17(3)-acid + 3 A + ADP + phosphate. In terms of biological role, involved in the biosynthesis of the unique nickel-containing tetrapyrrole coenzyme F430, the prosthetic group of methyl-coenzyme M reductase (MCR), which plays a key role in methanogenesis and anaerobic methane oxidation. Catalyzes both the six-electron reduction of the tetrahydroporphyrin ring system and the gamma-lactamization of the c-acetamide side chain of Ni-sirohydrochlorin a,c-diamide to yield 15,17(3)-seco-F430-17(3)-acid (seco-F430), the last intermediate in the biosynthesis of the coenzyme F430. The sequence is that of Ni-sirohydrochlorin a,c-diamide reductive cyclase complex, component CfbD from Methanosarcina acetivorans (strain ATCC 35395 / DSM 2834 / JCM 12185 / C2A).